A 309-amino-acid chain; its full sequence is Acetolactate synthase small subunit, mitochondrial (309 aa).

A mitochondrion-targeting transit peptide spans 1–24; it reads MLRSLLQSGHRRVVASSCATMVRC. The ACT domain occupies 79–159; that stretch reads VLNCLVQNEP…DYTNSEIIKR (81 aa).

This sequence belongs to the acetolactate synthase small subunit family. In terms of assembly, the acetolactate synthase complex contains the catalytic regulatory subunit ILV2 and the regulatory small subunit ILV6.

Its subcellular location is the mitochondrion. It participates in amino-acid biosynthesis; L-isoleucine biosynthesis; L-isoleucine from 2-oxobutanoate: step 1/4. It functions in the pathway amino-acid biosynthesis; L-valine biosynthesis; L-valine from pyruvate: step 1/4. Regulatory subunit of mitochondrial acetolactate synthase, which catalyzes the first of a series of common steps in the biosynthesis of the branched-chain amino acids. Stimulates activity of the acetolactate synthase catalytic subunit ILV2 seven- to tenfold and confers sensitivity to inhibition by valine and activation by ATP. This is Acetolactate synthase small subunit, mitochondrial (ILV6) from Saccharomyces cerevisiae (strain ATCC 204508 / S288c) (Baker's yeast).